We begin with the raw amino-acid sequence, 163 residues long: PTS system fructose-specific EIIB component (163 aa).

In terms of domain architecture, PTS EIIB type-4 spans 1 to 163 (MMNIVLARID…FVQILRNVTK (163 aa)). His15 functions as the Pros-phosphohistidine intermediate in the catalytic mechanism. A Phosphohistidine; by EIIA modification is found at His15.

The protein resides in the cytoplasm. The enzyme catalyses D-fructose(out) + N(pros)-phospho-L-histidyl-[protein] = D-fructose 1-phosphate(in) + L-histidyl-[protein]. The phosphoenolpyruvate-dependent sugar phosphotransferase system (sugar PTS), a major carbohydrate active -transport system, catalyzes the phosphorylation of incoming sugar substrates concomitantly with their translocation across the cell membrane. The enzyme II LevDE PTS system is involved in fructose transport. Functionally, levD and LevE act as negative regulators of the levanase operon. They may be involved in a PTS-mediated phosphorylation of a regulator. This is PTS system fructose-specific EIIB component from Bacillus subtilis (strain 168).